The following is a 1798-amino-acid chain: Laminin subunit beta-2 (1798 aa).

Residues 1-32 (MELTSRERGRGQPLPWELRLGLLLSVLAATLA) form the signal peptide. The Laminin N-terminal domain maps to 43 to 282 (SRGSCYPATG…ALYELVVRGN (240 aa)). An N-linked (GlcNAc...) asparagine glycan is attached at asparagine 248. 19 cysteine pairs are disulfide-bonded: cysteine 283–cysteine 292, cysteine 285–cysteine 310, cysteine 312–cysteine 321, cysteine 324–cysteine 344, cysteine 347–cysteine 356, cysteine 349–cysteine 374, cysteine 377–cysteine 386, cysteine 389–cysteine 407, cysteine 410–cysteine 423, cysteine 412–cysteine 438, cysteine 440–cysteine 449, cysteine 452–cysteine 467, cysteine 470–cysteine 484, cysteine 472–cysteine 491, cysteine 493–cysteine 502, cysteine 505–cysteine 519, cysteine 522–cysteine 534, cysteine 524–cysteine 541, and cysteine 543–cysteine 552. Laminin EGF-like domains lie at 283–346 (CFCY…ACRK), 347–409 (CECH…VCRS), 410–469 (CDCD…GCRR), and 470–521 (CQCN…GCRP). The N-linked (GlcNAc...) asparagine glycan is linked to asparagine 368. The region spanning 522 to 552 (CDCDVGGALDPQCDEGTGQCHCRQHMVGRRC) is the Laminin EGF-like 5; truncated domain. The region spanning 561–777 (RPFLDHLIWE…LLISLSTLIY (217 aa)) is the Laminin IV type B domain. Cystine bridges form between cysteine 783–cysteine 795, cysteine 785–cysteine 802, cysteine 804–cysteine 813, cysteine 816–cysteine 828, cysteine 831–cysteine 843, cysteine 833–cysteine 850, cysteine 852–cysteine 861, cysteine 864–cysteine 874, cysteine 877–cysteine 886, cysteine 879–cysteine 893, cysteine 896–cysteine 905, cysteine 908–cysteine 924, cysteine 927–cysteine 943, cysteine 929–cysteine 954, cysteine 956–cysteine 965, cysteine 968–cysteine 983, cysteine 986–cysteine 1000, cysteine 988–cysteine 1007, cysteine 1010–cysteine 1019, cysteine 1022–cysteine 1035, cysteine 1038–cysteine 1058, cysteine 1040–cysteine 1065, cysteine 1067–cysteine 1076, cysteine 1079–cysteine 1092, cysteine 1095–cysteine 1107, cysteine 1097–cysteine 1114, cysteine 1116–cysteine 1125, cysteine 1128–cysteine 1140, cysteine 1143–cysteine 1155, cysteine 1145–cysteine 1162, cysteine 1164–cysteine 1173, and cysteine 1176–cysteine 1187. Laminin EGF-like domains are found at residues 783-830 (CQCN…GCQA), 831-876 (CQCS…SCRP), 877-926 (CVCN…QCRP), 927-985 (CPCP…RCQL), 986-1037 (CECS…SCHR), 1038-1094 (CTCN…GCQP), 1095-1142 (CACH…QCHA), and 1143-1189 (CDCD…ACHP). A glycan (N-linked (GlcNAc...) asparagine) is linked at asparagine 1085. The segment at 1190 to 1409 (CHACFGDWDR…LSLTDINELV (220 aa)) is domain II. N-linked (GlcNAc...) asparagine glycosylation is found at asparagine 1249, asparagine 1308, and asparagine 1348. Residues 1253 to 1319 (ASTAQLVEAT…TLRQLDQHLD (67 aa)) adopt a coiled-coil conformation. A disordered region spans residues 1338-1364 (SQSAEAERRANTSALAVPSPVSNSASA). Low complexity predominate over residues 1350–1363 (SALAVPSPVSNSAS). A domain alpha region spans residues 1410 to 1442 (CGAPGDAPCATSPCGGAGCRDEDGQPRCGGLSC). The segment at 1443-1798 (NGAAATADLA…LQVQIYNTCQ (356 aa)) is domain I. Residues 1472 to 1526 (SILSRVAETRRQASEAQQRAQAALDKANASRGQVEQANQELQELIQSVKDFLNQE) are a coiled coil. N-linked (GlcNAc...) asparagine glycosylation is present at asparagine 1499. The residue at position 1532 (serine 1532) is a Phosphoserine; by FAM20C. A coiled-coil region spans residues 1577–1790 (VGDVRRAEQL…RSVLQAINLQ (214 aa)).

In terms of assembly, laminin is a complex glycoprotein, consisting of three different polypeptide chains (alpha, beta, gamma), which are bound to each other by disulfide bonds into a cross-shaped molecule comprising one long and three short arms with globules at each end. Beta-2 is a subunit of laminin-3 (laminin-121 or S-laminin), laminin-4 (laminin-221 or S-merosin), laminin-7 (laminin-321 or KS-laminin), laminin-9 (laminin-421), laminin-11 (laminin-521), laminin-14 (laminin-423) and laminin-15 (laminin-523).

It is found in the secreted. Its subcellular location is the extracellular space. The protein localises to the extracellular matrix. The protein resides in the basement membrane. In terms of biological role, binding to cells via a high affinity receptor, laminin is thought to mediate the attachment, migration and organization of cells into tissues during embryonic development by interacting with other extracellular matrix components. In Homo sapiens (Human), this protein is Laminin subunit beta-2 (LAMB2).